Here is a 375-residue protein sequence, read N- to C-terminus: 1-deoxy-D-xylulose 5-phosphate reductoisomerase (375 aa).

Residues threonine 10, glycine 11, serine 12, valine 13, lysine 37, and asparagine 114 each coordinate NADPH. A 1-deoxy-D-xylulose 5-phosphate-binding site is contributed by lysine 115. Glutamate 116 contacts NADPH. Aspartate 136 is a Mn(2+) binding site. 4 residues coordinate 1-deoxy-D-xylulose 5-phosphate: serine 137, glutamate 138, serine 162, and histidine 185. Glutamate 138 serves as a coordination point for Mn(2+). Glycine 191 contacts NADPH. Serine 198, asparagine 203, lysine 204, and glutamate 207 together coordinate 1-deoxy-D-xylulose 5-phosphate. Glutamate 207 contributes to the Mn(2+) binding site.

It belongs to the DXR family. It depends on Mg(2+) as a cofactor. The cofactor is Mn(2+).

The enzyme catalyses 2-C-methyl-D-erythritol 4-phosphate + NADP(+) = 1-deoxy-D-xylulose 5-phosphate + NADPH + H(+). It participates in isoprenoid biosynthesis; isopentenyl diphosphate biosynthesis via DXP pathway; isopentenyl diphosphate from 1-deoxy-D-xylulose 5-phosphate: step 1/6. Functionally, catalyzes the NADPH-dependent rearrangement and reduction of 1-deoxy-D-xylulose-5-phosphate (DXP) to 2-C-methyl-D-erythritol 4-phosphate (MEP). The polypeptide is 1-deoxy-D-xylulose 5-phosphate reductoisomerase (Sulfurihydrogenibium sp. (strain YO3AOP1)).